Here is a 92-residue protein sequence, read N- to C-terminus: PqqA binding protein (92 aa).

This sequence belongs to the PqqD family. In terms of assembly, monomer. Interacts with PqqE.

It participates in cofactor biosynthesis; pyrroloquinoline quinone biosynthesis. Functionally, functions as a PqqA binding protein and presents PqqA to PqqE, in the pyrroloquinoline quinone (PQQ) biosynthetic pathway. The chain is PqqA binding protein from Pseudomonas aeruginosa (strain UCBPP-PA14).